The following is a 362-amino-acid chain: Cobalt-precorrin-5B C(1)-methyltransferase (362 aa).

The protein belongs to the CbiD family.

It catalyses the reaction Co-precorrin-5B + S-adenosyl-L-methionine = Co-precorrin-6A + S-adenosyl-L-homocysteine. The protein operates within cofactor biosynthesis; adenosylcobalamin biosynthesis; cob(II)yrinate a,c-diamide from sirohydrochlorin (anaerobic route): step 6/10. Its function is as follows. Catalyzes the methylation of C-1 in cobalt-precorrin-5B to form cobalt-precorrin-6A. In Burkholderia lata (strain ATCC 17760 / DSM 23089 / LMG 22485 / NCIMB 9086 / R18194 / 383), this protein is Cobalt-precorrin-5B C(1)-methyltransferase.